The sequence spans 65 residues: Toxin Cbi1 (65 aa).

The 64-residue stretch at 1–64 (KDGYPMDNKG…VWDRATNKCR (64 aa)) folds into the LCN-type CS-alpha/beta domain. 4 disulfides stabilise this stretch: Cys-11-Cys-63, Cys-15-Cys-37, Cys-22-Cys-44, and Cys-26-Cys-46.

It belongs to the long (4 C-C) scorpion toxin superfamily. Sodium channel inhibitor family. Beta subfamily. In terms of tissue distribution, expressed by the venom gland.

It is found in the secreted. Beta toxins bind voltage-independently at site-4 of sodium channels (Nav) and shift the voltage of activation toward more negative potentials thereby affecting sodium channel activation and promoting spontaneous and repetitive firing. The polypeptide is Toxin Cbi1 (Centruroides bicolor (Scorpion)).